The primary structure comprises 209 residues: MSKVFVIDHPLIQHKLTLIRDKNTGSKDFRDLVKEISLLMGYEVTRNLSLQEIEIETPVGVTKSKVISGRKLGIVPILRAGLGMVDGILQLIPAAKVGHVGLYRDPETLEPVEYYCKLPVDVQEREIIVLDPMLATGGSANATLKAIKDRGVANMKLVCIVSCPEGIAAVQKAHPDVDIYVAAIDEKLNDHAYIVPGLGDAGDRLFGTK.

Residues Arg-79, Arg-104, and 131-139 (DPMLATGGS) contribute to the 5-phospho-alpha-D-ribose 1-diphosphate site. Residues Ile-194 and 199–201 (GDA) each bind uracil. A 5-phospho-alpha-D-ribose 1-diphosphate-binding site is contributed by Asp-200.

This sequence belongs to the UPRTase family. It depends on Mg(2+) as a cofactor.

It carries out the reaction UMP + diphosphate = 5-phospho-alpha-D-ribose 1-diphosphate + uracil. It functions in the pathway pyrimidine metabolism; UMP biosynthesis via salvage pathway; UMP from uracil: step 1/1. Allosterically activated by GTP. In terms of biological role, catalyzes the conversion of uracil and 5-phospho-alpha-D-ribose 1-diphosphate (PRPP) to UMP and diphosphate. In Alkaliphilus metalliredigens (strain QYMF), this protein is Uracil phosphoribosyltransferase.